A 117-amino-acid polypeptide reads, in one-letter code: Gamma-aminobutyric acid receptor-associated protein-like 1 (117 aa).

Gly116 carries the Phosphatidylethanolamine amidated glycine; alternate lipid modification. Residue Gly116 is the site of Phosphatidylserine amidated glycine; alternate attachment. Residue Lys117 is a propeptide, removed in mature form.

It belongs to the ATG8 family. In terms of assembly, interacts with ATG13, OPRK1, RB1CC1 and ULK1. Interacts with TP53INP1 and TP53INP2. Directly interacts with SQSTM1. Interacts with ATG3, ATG7 and MAP15. Interacts with TECPR2. Interacts with TBC1D5. Interacts with MAPK15. Interacts with TRIM5. Interacts with MEFV and TRIM21. Interacts with WDFY3. Interacts with the reticulophagy receptor TEX264. Interacts with UBA5. Interacts with KBTBD6 and KBTBD7; the interaction is direct. Interacts with reticulophagy regulators RETREG1, RETREG2 and RETREG3. Interacts with IRGM. Interacts with DNM2. Interacts with NCOA4 (via C-terminus). In terms of processing, the precursor molecule is cleaved by ATG4 (ATG4A, ATG4B, ATG4C or ATG4D) to expose the glycine at the C-terminus and form the cytosolic form, GABARAPL1-I. The processed form is then activated by APG7L/ATG7, transferred to ATG3 and conjugated to phosphatidylethanolamine (PE) phospholipid to form the membrane-bound form, GABARAPL1-II. During non-canonical autophagy, the processed form is conjugated to phosphatidylserine (PS) phospholipid. ATG4 proteins also mediate the delipidation of PE-conjugated forms required for GABARAPL1 recycling when autophagosomes fuse with lysosomes. In addition, ATG4B and ATG4D mediate delipidation of ATG8 proteins conjugated to PS during non-canonical autophagy. ATG4B constitutes the major protein for proteolytic activation. ATG4D is the main enzyme for delipidation activity.

The protein resides in the cytoplasmic vesicle. It localises to the autophagosome. Its subcellular location is the cytoplasmic vesicle membrane. It is found in the cytoplasm. The protein localises to the cytoskeleton. The protein resides in the endoplasmic reticulum. It localises to the golgi apparatus. Its function is as follows. Ubiquitin-like modifier that increases cell-surface expression of kappa-type opioid receptor through facilitating anterograde intracellular trafficking of the receptor. Involved in formation of autophagosomal vacuoles. While LC3s are involved in elongation of the phagophore membrane, the GABARAP/GATE-16 subfamily is essential for a later stage in autophagosome maturation. Through its interaction with the reticulophagy receptor TEX264, participates in the remodeling of subdomains of the endoplasmic reticulum into autophagosomes upon nutrient stress, which then fuse with lysosomes for endoplasmic reticulum turnover. The chain is Gamma-aminobutyric acid receptor-associated protein-like 1 from Bos taurus (Bovine).